The chain runs to 356 residues: S-adenosylmethionine:tRNA ribosyltransferase-isomerase (356 aa).

This sequence belongs to the QueA family. In terms of assembly, monomer.

The protein resides in the cytoplasm. The enzyme catalyses 7-aminomethyl-7-carbaguanosine(34) in tRNA + S-adenosyl-L-methionine = epoxyqueuosine(34) in tRNA + adenine + L-methionine + 2 H(+). Its pathway is tRNA modification; tRNA-queuosine biosynthesis. In terms of biological role, transfers and isomerizes the ribose moiety from AdoMet to the 7-aminomethyl group of 7-deazaguanine (preQ1-tRNA) to give epoxyqueuosine (oQ-tRNA). This chain is S-adenosylmethionine:tRNA ribosyltransferase-isomerase, found in Chromohalobacter salexigens (strain ATCC BAA-138 / DSM 3043 / CIP 106854 / NCIMB 13768 / 1H11).